A 279-amino-acid polypeptide reads, in one-letter code: Lacto-N-neotetraose biosynthesis glycosyltransferase LgtB (279 aa).

The protein belongs to the glycosyltransferase 25 family.

Its pathway is glycan metabolism; lacto-N-neotetraose biosynthesis. The protein operates within bacterial outer membrane biogenesis; lipooligosaccharide biosynthesis. Adds the second galactose to the lacto-N-tetraose chain in lipooligosaccharide (LOS). The sequence is that of Lacto-N-neotetraose biosynthesis glycosyltransferase LgtB (lgtB) from Neisseria gonorrhoeae.